Here is a 185-residue protein sequence, read N- to C-terminus: NADH-quinone oxidoreductase subunit B (185 aa).

Positions 38, 39, 104, and 133 each coordinate [4Fe-4S] cluster.

This sequence belongs to the complex I 20 kDa subunit family. As to quaternary structure, NDH-1 is composed of 14 different subunits. Subunits NuoB, C, D, E, F, and G constitute the peripheral sector of the complex. [4Fe-4S] cluster is required as a cofactor.

It is found in the cell membrane. The enzyme catalyses a quinone + NADH + 5 H(+)(in) = a quinol + NAD(+) + 4 H(+)(out). In terms of biological role, NDH-1 shuttles electrons from NADH, via FMN and iron-sulfur (Fe-S) centers, to quinones in the respiratory chain. The immediate electron acceptor for the enzyme in this species is believed to be a menaquinone. Couples the redox reaction to proton translocation (for every two electrons transferred, four hydrogen ions are translocated across the cytoplasmic membrane), and thus conserves the redox energy in a proton gradient. The polypeptide is NADH-quinone oxidoreductase subunit B (Cutibacterium acnes (strain DSM 16379 / KPA171202) (Propionibacterium acnes)).